Reading from the N-terminus, the 147-residue chain is MERTFIMIKPDAIKRRLISRIIQRFEEKGLYLAASKCVIPKREVLETHYSHLSSMPFFSEMVEDMMSGMVLAMVWVGKDAVSIGRKLIGETNPQAASVGTIRGDYGVSTGKNIIHGSDCVENAEKEIKLWIGDDVQPVSFFDKEWIY.

Positions 9, 85, 91, 102, and 112 each coordinate ATP. The active-site Pros-phosphohistidine intermediate is the histidine 115.

The protein belongs to the NDK family. Mg(2+) is required as a cofactor.

The catalysed reaction is a 2'-deoxyribonucleoside 5'-diphosphate + ATP = a 2'-deoxyribonucleoside 5'-triphosphate + ADP. It catalyses the reaction a ribonucleoside 5'-diphosphate + ATP = a ribonucleoside 5'-triphosphate + ADP. Major role in the synthesis of nucleoside triphosphates other than ATP. The ATP gamma phosphate is transferred to the NDP beta phosphate via a ping-pong mechanism, using a phosphorylated active-site intermediate. The sequence is that of Nucleoside diphosphate kinase (NDK1) from Encephalitozoon cuniculi (strain GB-M1) (Microsporidian parasite).